The following is a 222-amino-acid chain: DnaJ homolog subfamily B member 9 (222 aa).

Positions 1–23 (MATPQSVFVFAICILMITELILA) are cleaved as a signal peptide. The J domain maps to 26-90 (NYYDILGVPK…NRRKEYDIIG (65 aa)). The tract at residues 91–222 (HSAFTNGKGQ…VTTYTDCSGQ (132 aa)) is divergent targeting domain. Position 133 is a phosphoserine (S133).

As to quaternary structure, interacts with HSPA5/BiP; interaction is direct. Interacts with ERN1/IRE1 (via the luminal region). Interacts with DERL1.

Its subcellular location is the endoplasmic reticulum lumen. In terms of biological role, co-chaperone for Hsp70 protein HSPA5/BiP that acts as a key repressor of the ERN1/IRE1-mediated unfolded protein response (UPR). J domain-containing co-chaperones stimulate the ATPase activity of Hsp70 proteins and are required for efficient substrate recognition by Hsp70 proteins. In the unstressed endoplasmic reticulum, interacts with the luminal region of ERN1/IRE1 and selectively recruits HSPA5/BiP: HSPA5/BiP disrupts the dimerization of the active ERN1/IRE1 luminal region, thereby inactivating ERN1/IRE1. Also involved in endoplasmic reticulum-associated degradation (ERAD) of misfolded proteins. Required for survival of B-cell progenitors and normal antibody production. In Rattus norvegicus (Rat), this protein is DnaJ homolog subfamily B member 9.